Consider the following 310-residue polypeptide: MEIRIGSRKSSLAMWQTCYVEDKLKQSGITTSILPIDTRGDQVLNVAIAKIGSKGVFTEELEAKLADGDIDIAVHSAKDMPSVLPDGFELIAFTDREEPADVLVSHKKDLDISDSSRPVTIGTSSVRRQALLGRFYPHVRTVDIRGNVQTRVLKMKEGLCDAILMAYAGIHRMGMDDLIVHTFSPDTFIPPVGQGCIAVEASSRLAAEKKEAIRACINHPASETCLLAERAFLKRLEGGCSIPAFALARLNGDRLTLSGGLMSLDGKKFIFNTRAGAGSQATAIGTDLGNHVLENGGAALLAEIRKQQTT.

C240 is subject to S-(dipyrrolylmethanemethyl)cysteine.

It belongs to the HMBS family. In terms of assembly, monomer. The cofactor is dipyrromethane.

The enzyme catalyses 4 porphobilinogen + H2O = hydroxymethylbilane + 4 NH4(+). The protein operates within porphyrin-containing compound metabolism; protoporphyrin-IX biosynthesis; coproporphyrinogen-III from 5-aminolevulinate: step 2/4. Its function is as follows. Tetrapolymerization of the monopyrrole PBG into the hydroxymethylbilane pre-uroporphyrinogen in several discrete steps. The sequence is that of Porphobilinogen deaminase from Desulfosudis oleivorans (strain DSM 6200 / JCM 39069 / Hxd3) (Desulfococcus oleovorans).